The primary structure comprises 93 residues: Small ribosomal subunit protein uS19 (93 aa).

The protein belongs to the universal ribosomal protein uS19 family.

Its function is as follows. Protein S19 forms a complex with S13 that binds strongly to the 16S ribosomal RNA. The chain is Small ribosomal subunit protein uS19 from Desulfitobacterium hafniense (strain Y51).